We begin with the raw amino-acid sequence, 361 residues long: Elongator complex protein 4 (361 aa).

Disordered stretches follow at residues 93–124 (QLPG…PQQE) and 338–361 (DDEQ…SLDF). Composition is skewed to polar residues over residues 104 to 121 (NENS…SKNP) and 346 to 355 (ISNTNPQKQP).

This sequence belongs to the ELP4 family. As to quaternary structure, component of the elongator complex.

The protein resides in the cytoplasm. It is found in the nucleus. The protein operates within tRNA modification; 5-methoxycarbonylmethyl-2-thiouridine-tRNA biosynthesis. Its function is as follows. Component of the elongator complex, a multiprotein complex which is required for multiple tRNA modifications, including mcm5U (5-methoxycarbonylmethyl uridine), mcm5s2U (5-methoxycarbonylmethyl-2-thiouridine), and ncm5U (5-carbamoylmethyl uridine). The elongator complex catalyzes formation of carboxymethyluridine in the wobble base at position 34 in tRNAs. The sequence is that of Elongator complex protein 4 from Schizosaccharomyces pombe (strain 972 / ATCC 24843) (Fission yeast).